The sequence spans 185 residues: MVSAGDFRKGVTFEKDGQPCLVVDFQHVKPGKGAAFVRTKYKNLKTGAIREESFNPSEKFPKAVIDTRQMQYLYNDGELYYFMDQENFEQIPLNYEQVEDAIKFLKENEVATIRFYQGQPFQVEAPNFAELEVTDTEPGIKGDTASNVTKAATVETGAVVQVPLFINTGDKVKIDTRTGEYLSRV.

It belongs to the elongation factor P family.

Its subcellular location is the cytoplasm. It functions in the pathway protein biosynthesis; polypeptide chain elongation. Involved in peptide bond synthesis. Stimulates efficient translation and peptide-bond synthesis on native or reconstituted 70S ribosomes in vitro. Probably functions indirectly by altering the affinity of the ribosome for aminoacyl-tRNA, thus increasing their reactivity as acceptors for peptidyl transferase. The protein is Elongation factor P of Clostridioides difficile (strain 630) (Peptoclostridium difficile).